Here is a 236-residue protein sequence, read N- to C-terminus: Leucyl/phenylalanyl-tRNA--protein transferase (236 aa).

This sequence belongs to the L/F-transferase family.

It localises to the cytoplasm. The enzyme catalyses N-terminal L-lysyl-[protein] + L-leucyl-tRNA(Leu) = N-terminal L-leucyl-L-lysyl-[protein] + tRNA(Leu) + H(+). The catalysed reaction is N-terminal L-arginyl-[protein] + L-leucyl-tRNA(Leu) = N-terminal L-leucyl-L-arginyl-[protein] + tRNA(Leu) + H(+). It carries out the reaction L-phenylalanyl-tRNA(Phe) + an N-terminal L-alpha-aminoacyl-[protein] = an N-terminal L-phenylalanyl-L-alpha-aminoacyl-[protein] + tRNA(Phe). In terms of biological role, functions in the N-end rule pathway of protein degradation where it conjugates Leu, Phe and, less efficiently, Met from aminoacyl-tRNAs to the N-termini of proteins containing an N-terminal arginine or lysine. The polypeptide is Leucyl/phenylalanyl-tRNA--protein transferase (Shewanella oneidensis (strain ATCC 700550 / JCM 31522 / CIP 106686 / LMG 19005 / NCIMB 14063 / MR-1)).